The following is a 340-amino-acid chain: CMP-sialic acid transporter 1 (340 aa).

At 1–5 (MAATP) the chain is on the cytoplasmic side. Residues 6 to 26 (WYFVAVLLTILTSSQGILTTL) traverse the membrane as a helical segment. Over 27–36 (SQSDGGYKYD) the chain is Lumenal. The helical transmembrane segment at 37-57 (YATVPFLAEVFKLIISGLFLW) threads the bilayer. Over 58–78 (REMRTSSSTTSRITTDWKSVR) the chain is Cytoplasmic. Residues 79-99 (LFVIPSLIYLIHNNVQFATLT) form a helical membrane-spanning segment. At 100–102 (YVD) the chain is on the lumenal side. A helical membrane pass occupies residues 103-125 (TSTYQIMGNLKIVTTGILFRLFL). The Cytoplasmic segment spans residues 126–168 (KRKLSKLQWMAIGLLAVGTTTSQVKGCGEASCDSLFTAPIQGY). A helical transmembrane segment spans residues 169 to 189 (LLGILSAGLSALAGIYTEFLM). At 190-200 (KRNNDTLYWQN) the chain is on the lumenal side. The chain crosses the membrane as a helical span at residues 201–217 (LQLYTFGSLFNVARLIA). Over 218 to 238 (DDFRHGFEKGPWWQRIFDGYS) the chain is Cytoplasmic. Residues 239–259 (ITTWLVVLNLGSTGLLVSWLM) form a helical membrane-spanning segment. The Lumenal segment spans residues 260–282 (KYADNIVKVYSTSMAMLLTMVAS). The chain crosses the membrane as a helical span at residues 283–303 (IYLFSFKPTLQLFLGIVICIM). The Cytoplasmic portion of the chain corresponds to 304 to 340 (SLHMYFAPPHTLVDLPVTNEAHAKTLKQVVVEEKTDS).

The protein belongs to the nucleotide-sugar transporter family. CMP-Sialate:CMP antiporter (TC 2.A.7.12) subfamily.

It localises to the golgi apparatus membrane. Its function is as follows. Essential protein. Sugar transporter involved in the transport of CMP-sialic acid from the cytoplasm into the Golgi. In Arabidopsis thaliana (Mouse-ear cress), this protein is CMP-sialic acid transporter 1.